The primary structure comprises 317 residues: UAP56-interacting factor (317 aa).

An N-acetylmethionine modification is found at Met-1. The interval 1–23 is disordered; it reads MNRFGTRLVGATATTPPAPKARS. Phosphothreonine is present on Thr-14. Ser-23 carries the post-translational modification Phosphoserine. The UAP56-binding motif signature appears at 26–44; it reads NLDKIDMSLDEIIKLNRKE. Ser-60 and Ser-117 each carry phosphoserine. Lys-139 is covalently cross-linked (Glycyl lysine isopeptide (Lys-Gly) (interchain with G-Cter in SUMO1)). Residue Lys-260 forms a Glycyl lysine isopeptide (Lys-Gly) (interchain with G-Cter in SUMO2) linkage.

Belongs to the UIF family. Interacts with DDX39B/UAP56 and NXF1; interaction with DDX39B/UAP56 and NXF1 are mutually exclusive. Interacts with SSRP1; required for its recruitment to mRNAs. Interacts with CHTOP.

The protein localises to the nucleus. It is found in the nucleoplasm. Its subcellular location is the nucleus speckle. Functionally, required for mRNA export from the nucleus to the cytoplasm. Acts as an adapter that uses the DDX39B/UAP56-NFX1 pathway to ensure efficient mRNA export and delivering to the nuclear pore. Associates with spliced and unspliced mRNAs simultaneously with ALYREF/THOC4. In Rattus norvegicus (Rat), this protein is UAP56-interacting factor (Fyttd1).